The following is a 244-amino-acid chain: MSDEEEVTYEEEEEEYVEEEEEEVVAPEPPKPAPPPAAPPPLIRRRSSANYRSYATEPQVKRKPKISASRKLQLNTMMLQIAKAEMEREEEERAREKERYLAEHCQPLQLSGLSRSELQDLCQELHARIDVVDEERYDMEAKVNKNITELEDLNQKIFDLRGKFKKPNLRRVRLSADAMMMALLGTKHKVSMDLRANLKQVKQTKKDDADKDIREVGDWRKNVDALSGMEGRKKKFESTGAAAV.

The segment covering 1-25 has biased composition (acidic residues); that stretch reads MSDEEEVTYEEEEEEYVEEEEEEVV. The segment at 1–67 is disordered; it reads MSDEEEVTYE…PQVKRKPKIS (67 aa). N-acetylserine is present on serine 2. Phosphoserine; by CK2 is present on serine 2. A compositionally biased stretch (pro residues) spans 27-42; that stretch reads PEPPKPAPPPAAPPPL.

The protein belongs to the troponin I family. Binds to actin and tropomyosin. As to expression, heart.

Functionally, troponin I is the inhibitory subunit of troponin, the thin filament regulatory complex which confers calcium-sensitivity to striated muscle actomyosin ATPase activity. The chain is Troponin I, cardiac muscle (tnni3) from Xenopus laevis (African clawed frog).